Reading from the N-terminus, the 457-residue chain is UDP-N-acetylmuramate--L-alanyl-gamma-D-glutamyl-meso-2,6-diaminoheptandioate ligase (457 aa).

110–116 contributes to the ATP binding site; sequence GTHGKTT.

This sequence belongs to the MurCDEF family. Mpl subfamily. The cofactor is Mg(2+).

It is found in the secreted. It catalyses the reaction UDP-N-acetyl-alpha-D-muramate + L-alanyl-gamma-D-glutamyl-meso-2,6-diaminopimelate + ATP = UDP-N-acetyl-alpha-D-muramoyl-L-alanyl-gamma-D-glutamyl-meso-2,6-diaminopimelate + ADP + phosphate + H(+). It participates in cell wall biogenesis; peptidoglycan recycling. In terms of biological role, reutilizes the intact tripeptide L-alanyl-gamma-D-glutamyl-meso-diaminopimelate by linking it to UDP-N-acetylmuramate. The enzyme can also use the tetrapeptide L-alanyl-gamma-D-glutamyl-meso-2,6-diaminoheptanedioyl-D-alanine or the pentapeptide L-alanyl-gamma-D-glutamyl-meso-2,6-diaminoheptandioyl-D-alanyl-D-alanine in vivo and in vitro. This chain is UDP-N-acetylmuramate--L-alanyl-gamma-D-glutamyl-meso-2,6-diaminoheptandioate ligase, found in Escherichia coli (strain K12).